The chain runs to 858 residues: Zinc finger protein ZXDC (858 aa).

Disordered stretches follow at residues 1–127 and 151–174; these read MDLP…APAG and PGPA…STPG. 3 stretches are compositionally biased toward low complexity: residues 23–35, 84–97, and 151–171; these read PLRR…GASP, GGAA…QEAE, and PGPA…SGPS. The residue at position 34 (serine 34) is a Phosphoserine. At threonine 172 the chain carries Phosphothreonine. C2H2-type zinc fingers lie at residues 175–199, 208–232, 238–262, 268–290, 297–321, 328–352, 358–382, 388–412, 418–442, and 451–476; these read YRCP…LLTH, FKCP…LQSH, FGCP…MKGH, FKCE…QRSH, YKCD…NRAH, FSCS…LRSH, FICD…RRKH, FTCP…SITH, FECP…SKKH, and SRCP…VRQH. The tract at residues 579-688 is required for transcriptional activation; it reads DSPLVLGTAA…HGLPQSTLPS (110 aa). Lysine 660 is covalently cross-linked (Glycyl lysine isopeptide (Lys-Gly) (interchain with G-Cter in SUMO)). Disordered regions lie at residues 660–696, 726–756, and 837–858; these read KVEP…HGAQ, KEKK…SPPH, and GGPA…QDLQ. A Phosphoserine modification is found at serine 665. Over residues 675–687 the composition is skewed to polar residues; the sequence is QEGSHGLPQSTLP. Residues 781–858 are interaction with CIITA; the sequence is PAAGVQCGAQ…GSTINLQDLQ (78 aa). Polar residues predominate over residues 847–858; sequence FPGSTINLQDLQ.

This sequence belongs to the ZXD family. As to quaternary structure, self-associates. Interacts with ZXDA and CIITA. In terms of processing, sumoylated at Lys-660 with SUMO1, SUMO2 and SUMO3; sumoylation enhances the activity of the transcriptional activation domain. Expressed at high levels in heart, kidney, liver and testis, at moderate levels in brain and stomach, and at low levels in lung, muscle, placenta, small intestine and spleen.

It is found in the nucleus. Functionally, cooperates with CIITA to promote transcription of MHC class I and MHC class II genes. The chain is Zinc finger protein ZXDC (ZXDC) from Homo sapiens (Human).